Consider the following 233-residue polypeptide: Orotidine 5'-phosphate decarboxylase (233 aa).

Residues aspartate 10, lysine 32, 60-69, threonine 115, arginine 176, glutamine 185, glycine 205, and arginine 206 contribute to the substrate site; that span reads DLKLHDIPAT. Lysine 62 serves as the catalytic Proton donor.

The protein belongs to the OMP decarboxylase family. Type 1 subfamily. As to quaternary structure, homodimer.

It carries out the reaction orotidine 5'-phosphate + H(+) = UMP + CO2. The protein operates within pyrimidine metabolism; UMP biosynthesis via de novo pathway; UMP from orotate: step 2/2. Catalyzes the decarboxylation of orotidine 5'-monophosphate (OMP) to uridine 5'-monophosphate (UMP). The protein is Orotidine 5'-phosphate decarboxylase of Thermobifida fusca (strain YX).